The chain runs to 452 residues: Probable ECA polymerase (452 aa).

11 helical membrane passes run 6-26 (FSGL…LTWF), 37-57 (VFFS…TSVL), 63-83 (VGVA…CFYG), 118-138 (VILM…NGFL), 155-175 (GVAL…VYFL), 181-201 (AWLF…MIVG), 207-227 (IIIA…ISLW), 228-248 (MLVA…LKRY), 341-361 (LVVM…GLII), 378-398 (YKAA…IVLA), and 410-430 (VFFL…FWLF).

Belongs to the WzyE family. As to quaternary structure, probably part of a complex composed of WzxE, WzyE and WzzE.

Its subcellular location is the cell inner membrane. Its pathway is bacterial outer membrane biogenesis; enterobacterial common antigen biosynthesis. Probably involved in the polymerization of enterobacterial common antigen (ECA) trisaccharide repeat units. The chain is Probable ECA polymerase from Salmonella agona (strain SL483).